The sequence spans 334 residues: HTH-type transcriptional repressor PurR (334 aa).

Positions 2–56 (ATIKDVARLAGVSTTTVSHVINKTRFVAEATQEKVNKAVDELNYAPSAVARSLKC) constitute an HTH lacI-type domain. The segment at residues 4–23 (IKDVARLAGVSTTTVSHVIN) is a DNA-binding region (H-T-H motif). A DNA-binding region spans residues 48–56 (SAVARSLKC). Hypoxanthine-binding residues include Phe-73, Lys-189, Phe-220, and Asp-274.

As to quaternary structure, homodimer.

It participates in purine metabolism; purine nucleotide biosynthesis [regulation]. Its function is as follows. Is the main repressor of the genes involved in the de novo synthesis of purine nucleotides, regulating purB, purC, purEK, purF, purHD, purL, purMN and guaBA expression. PurR is allosterically activated to bind its cognate DNA by binding the purine corepressors, hypoxanthine or guanine, thereby effecting transcription repression. The sequence is that of HTH-type transcriptional repressor PurR from Vibrio atlanticus (strain LGP32) (Vibrio splendidus (strain Mel32)).